Consider the following 361-residue polypeptide: MTSAESLLFTSLGPSPSSGDGDCRFNEEFKFILLPMSYAVVFVLGLALNAPTLWLFLFRLRPWDATATYMFHLALSDTLYVLSLPTLVYYYAARNHWPFGTGLCKFVRFLFYWNLYCSVLFLTCISVHRYLGICHPLRAIRWGRPRFASLLCLGVWLVVAGCLVPNLFFVTTNANGTTILCHDTTLPEEFDHYVYFSSAVMVLLFGLPFLITLVCYGLMARRLYRPLPGAGQSSSRLRSLRTIAVVLTVFAVCFVPFHITRTIYYQARLLQADCHVLNIVNVVYKVTRPLASANSCLDPVLYLFTGDKYRNQLQQLCRGSKPKPRTAASSLALVTLHEESISRWADTHQDSTFSAYEGDRL.

Positions 1–20 (MTSAESLLFTSLGPSPSSGD) are disordered. Over 1–30 (MTSAESLLFTSLGPSPSSGDGDCRFNEEFK) the chain is Extracellular. The helical transmembrane segment at 31–58 (FILLPMSYAVVFVLGLALNAPTLWLFLF) threads the bilayer. The Cytoplasmic portion of the chain corresponds to 59–68 (RLRPWDATAT). A helical transmembrane segment spans residues 69-91 (YMFHLALSDTLYVLSLPTLVYYY). Residues 92 to 108 (AARNHWPFGTGLCKFVR) lie on the Extracellular side of the membrane. Cys-104 and Cys-181 form a disulfide bridge. Residues 109 to 127 (FLFYWNLYCSVLFLTCISV) form a helical membrane-spanning segment. Residues 128 to 149 (HRYLGICHPLRAIRWGRPRFAS) lie on the Cytoplasmic side of the membrane. The chain crosses the membrane as a helical span at residues 150-170 (LLCLGVWLVVAGCLVPNLFFV). At 171–192 (TTNANGTTILCHDTTLPEEFDH) the chain is on the extracellular side. Asn-175 carries an N-linked (GlcNAc...) asparagine glycan. A helical membrane pass occupies residues 193–218 (YVYFSSAVMVLLFGLPFLITLVCYGL). The Cytoplasmic segment spans residues 219 to 242 (MARRLYRPLPGAGQSSSRLRSLRT). Residues 243–265 (IAVVLTVFAVCFVPFHITRTIYY) form a helical membrane-spanning segment. The Extracellular segment spans residues 266–283 (QARLLQADCHVLNIVNVV). Residues 284–305 (YKVTRPLASANSCLDPVLYLFT) traverse the membrane as a helical segment. Residues 306 to 361 (GDKYRNQLQQLCRGSKPKPRTAASSLALVTLHEESISRWADTHQDSTFSAYEGDRL) lie on the Cytoplasmic side of the membrane.

Belongs to the G-protein coupled receptor 1 family. In terms of processing, phosphorylation of Ser-329 and Ser-330 is a key step in agonist-dependent desensitization and loss of surface P2RY4. This phosphorylation does not involve PKC, nor other calcium-activated kinases. As to expression, widely expressed at low levels. In brain, higher expression in the pineal gland and ventricular system.

It localises to the cell membrane. In terms of biological role, receptor for ATP and UTP coupled to G-proteins that activate a phosphatidylinositol-calcium second messenger system. Not activated by ADP or UDP. In Rattus norvegicus (Rat), this protein is P2Y purinoceptor 4 (P2ry4).